Consider the following 49-residue polypeptide: MQVLSSLKEAKLRHRDCQVVRRRGRIYVICKSNPRFKARQGGARNRRKG.

Belongs to the bacterial ribosomal protein bL36 family.

The polypeptide is Large ribosomal subunit protein bL36 (Delftia acidovorans (strain DSM 14801 / SPH-1)).